The sequence spans 32 residues: ATP synthase 28 kDa subunit, mitochondrial (32 aa).

It localises to the mitochondrion. The protein resides in the mitochondrion inner membrane. In terms of biological role, mitochondrial membrane ATP synthase (F(1)F(0) ATP synthase or Complex V) produces ATP from ADP in the presence of a proton gradient across the membrane which is generated by electron transport complexes of the respiratory chain. F-type ATPases consist of two structural domains, F(1) - containing the extramembraneous catalytic core and F(0) - containing the membrane proton channel, linked together by a central stalk and a peripheral stalk. During catalysis, ATP synthesis in the catalytic domain of F(1) is coupled via a rotary mechanism of the central stalk subunits to proton translocation. Part of the complex F(0) domain. The protein is ATP synthase 28 kDa subunit, mitochondrial of Spinacia oleracea (Spinach).